Consider the following 706-residue polypeptide: Histone deacetylase HDA1 (706 aa).

Residues 1 to 24 (MDSVMVKKEVLENPDHDLKRKLEE) are compositionally biased toward basic and acidic residues. The interval 1-36 (MDSVMVKKEVLENPDHDLKRKLEENKEEENSLSTTS) is disordered. Residues 67-396 (RYHAKIFTSY…ALSVAKVLIG (330 aa)) are histone deacetylase. Residue His206 is part of the active site.

The protein belongs to the histone deacetylase family. HD type 2 subfamily.

The protein resides in the nucleus. The enzyme catalyses N(6)-acetyl-L-lysyl-[histone] + H2O = L-lysyl-[histone] + acetate. Its function is as follows. Responsible for the deacetylation of lysine residues on the N-terminal part of the core histones (H2A, H2B, H3 and H4). Histone deacetylation gives a tag for epigenetic repression and plays an important role in transcriptional regulation, cell cycle progression and developmental events. Histone deacetylases act via the formation of large multiprotein complexes. The protein is Histone deacetylase HDA1 (HDA1) of Saccharomyces cerevisiae (strain ATCC 204508 / S288c) (Baker's yeast).